Consider the following 554-residue polypeptide: uncharacterized protein (554 aa).

The next 5 helical transmembrane spans lie at 13–31, 36–58, 73–92, 99–121, and 161–183; these read SVAHIVFLYAFVVAAGVYL, IFGVSLGVTFVLFAGILMGHFGF, LILFVFCIGLQVGPSFFSSF, LNLLAVGIVVLNIAVALGLYYLW, and IALGYACAYPLGVVGIIGSIIAI. RCK C-terminal domains follow at residues 199–281 and 282–366; these read KTQS…FIGK and EVEL…VLGN. The next 4 helical transmembrane spans lie at 376-395, 405-422, 442-464, and 468-490; these read IVTIFVGIFLGILLGSLPIA, LGLAGGPLVVAILIGRFG, IGIVLFLASVGIDAGANFVQTVV, and GLLYVGCGFLITVIPLLIIGAIA.

Belongs to the AAE transporter (TC 2.A.81) family.

Its subcellular location is the cell membrane. This is an uncharacterized protein from Bacteroides thetaiotaomicron (strain ATCC 29148 / DSM 2079 / JCM 5827 / CCUG 10774 / NCTC 10582 / VPI-5482 / E50).